Reading from the N-terminus, the 951-residue chain is Leucine-rich repeat-containing G-protein coupled receptor 4 (951 aa).

An N-terminal signal peptide occupies residues 1–24; that stretch reads MPGPLGLLCFLALGLLGSAGPSGA. One can recognise an LRRNT domain in the interval 25–57; it reads APPLCAAPCSCDGDRRVDCSGKGLTAVPEGLSA. Residues 25–544 are Extracellular-facing; that stretch reads APPLCAAPCS…LLGSWMIRLT (520 aa). Intrachain disulfides connect C29–C35 and C33–C43. LRR repeat units lie at residues 58-79, 82-103, 106-127, 130-151, 154-177, 178-199, 202-223, 226-247, 249-270, and 273-294; these read FTQA…AFKN, FLEE…ALSG, ELKV…AIRG, ALQS…SFEG, QLRH…SNLP, TLQA…AFTN, SLVV…CFDG, NLET…IKAL, SLKE…AFDG, and LLRT…AFHN. N68 is a glycosylation site (N-linked (GlcNAc...) asparagine). N199 carries an N-linked (GlcNAc...) asparagine glycan. 2 N-linked (GlcNAc...) asparagine glycosylation sites follow: N294 and N314. LRR repeat units lie at residues 320–341, 344–365, 366–387, 390–411, and 414–435; these read HLES…LCQE, MLRT…NGCH, ALEE…TFQG, SLRI…AFAT, and PITN…GLNG. A disulfide bridge connects residues C339 and C364. Intrachain disulfides connect C470–C522 and C471–C476. Residue N505 is glycosylated (N-linked (GlcNAc...) asparagine). Residues 545-565 traverse the membrane as a helical segment; that stretch reads VWFIFLVALFFNLLVILTTFA. Residues 566 to 575 lie on the Cytoplasmic side of the membrane; the sequence is SCTSLPSSKL. A helical membrane pass occupies residues 576–596; the sequence is FIGLISVSNLFMGIYTGILTF. Residues 597-620 lie on the Extracellular side of the membrane; sequence LDAVSWGRFAEFGIWWETGSGCKV. C618 and C693 are joined by a disulfide. Residues 621-641 traverse the membrane as a helical segment; that stretch reads AGFLAVFSSESAIFLLMLATV. Residues 642–661 are Cytoplasmic-facing; it reads ERSLSAKDIMKNGKSNHLKQ. Residues 662–682 form a helical membrane-spanning segment; it reads FRVAALLAFLGATVAGCFPLF. Topologically, residues 683–703 are extracellular; sequence HRGEYSASPLCLPFPTGETPS. A helical membrane pass occupies residues 704-724; that stretch reads LGFTVTLVLLNSLAFLLMAVI. Residues 725-756 lie on the Cytoplasmic side of the membrane; that stretch reads YTKLYCNLEKEDLSENSQSSMIKHVAWLIFTN. The chain crosses the membrane as a helical span at residues 757–777; the sequence is CIFFCPVAFFSFAPLITAISI. The Extracellular portion of the chain corresponds to 778–783; that stretch reads SPEIMK. The chain crosses the membrane as a helical span at residues 784 to 804; it reads SVTLIFFPLPACLNPVLYVFF. The Cytoplasmic portion of the chain corresponds to 805-951; the sequence is NPKFKEDWKL…YAYNLPRVKD (147 aa). S920 is modified (phosphoserine).

It belongs to the G-protein coupled receptor 1 family. As to expression, expressed in multiple steroidogenic tissues: placenta, ovary, testis and adrenal. Expressed also in spinal cord, thyroid, stomach, trachea, heart, pancreas, kidney, prostate and spleen.

It localises to the cell membrane. Functionally, receptor for R-spondins that potentiates the canonical Wnt signaling pathway and is involved in the formation of various organs. Upon binding to R-spondins (RSPO1, RSPO2, RSPO3 or RSPO4), associates with phosphorylated LRP6 and frizzled receptors that are activated by extracellular Wnt receptors, triggering the canonical Wnt signaling pathway to increase expression of target genes. In contrast to classical G-protein coupled receptors, does not activate heterotrimeric G-proteins to transduce the signal. Its function as activator of the Wnt signaling pathway is required for the development of various organs, including liver, kidney, intestine, bone, reproductive tract and eye. May also act as a receptor for norrin (NDP), such results however require additional confirmation in vivo. Required during spermatogenesis to activate the Wnt signaling pathway in peritubular myoid cells. Required for the maintenance of intestinal stem cells and Paneth cell differentiation in postnatal intestinal crypts. Acts as a regulator of bone formation and remodeling. Involved in kidney development; required for maintaining the ureteric bud in an undifferentiated state. Involved in the development of the anterior segment of the eye. Required during erythropoiesis. Also acts as a negative regulator of innate immunity by inhibiting TLR2/TLR4 associated pattern-recognition and pro-inflammatory cytokine production. Plays an important role in regulating the circadian rhythms of plasma lipids, partially through regulating the rhythmic expression of MTTP. Required for proper development of GnRH neurons (gonadotropin-releasing hormone expressing neurons) that control the release of reproductive hormones from the pituitary gland. The chain is Leucine-rich repeat-containing G-protein coupled receptor 4 (LGR4) from Homo sapiens (Human).